The primary structure comprises 92 residues: Nodulation protein F (92 aa).

Residues 4 to 88 enclose the Carrier domain; it reads QLTLEIISAI…DVVEAVRGLL (85 aa). O-(pantetheine 4'-phosphoryl)serine is present on Ser-45.

In terms of processing, 4'-phosphopantetheine is transferred from CoA to a specific serine of apo-NodF.

Proposed to synthesize nod factor fatty acyl chain. Involved in trans-2,trans-4,trans-6,cis-11-octadecatetraenoic acid biosynthesis. In Rhizobium leguminosarum bv. viciae, this protein is Nodulation protein F (nodF).